The following is a 232-amino-acid chain: Protein TIFY 10c (232 aa).

The interval Pro54 to Leu73 is disordered. The Tify domain occupies Ala114–Thr149. The segment at Asp151 to Leu176 is disordered. Residues Asn156–Leu165 show a composition bias toward polar residues. Positions Pro177 to Gln202 match the Jas motif. Positions Ala179–Arg186 match the Nuclear localization signal motif.

The protein belongs to the TIFY/JAZ family. Interacts with BHLH148. Interacts with COI1B in a coronatine-dependent manner. Coronatine is an analog of jasmonoyl isoleucine (JA-Ile). Interacts with TIFY5/JAZ2, TIFY6B/JAZ4, TIFY9/JAZ5, TIFY11A, TIFY11D/JAZ12 and TIFY11G/JAZ15. Ubiquitinated. Increase in jasmonoyl isoleucine (JA-Ile) levels mediates its degradation via COI1B-mediated proteasome pathway.

It is found in the nucleus. The protein resides in the cytoplasm. The protein localises to the cytosol. In terms of biological role, repressor of jasmonate (JA) responses. Acts as a repressor of JA-induced resistance to the bacterial blight pathogen Xanthomonas oryzae pv. oryzae (Xoo). Regulates JA-induced accumulation of linalool at the transcriptional level of linalool synthase gene LIS. Linalool is important for resistance to bacterial blight pathogen Xoo. The chain is Protein TIFY 10c from Oryza sativa subsp. indica (Rice).